The primary structure comprises 220 residues: Orotate phosphoribosyltransferase (220 aa).

Lysine 26 is a binding site for 5-phospho-alpha-D-ribose 1-diphosphate. An orotate-binding site is contributed by 34-35; sequence FF. Residues 72 to 73, arginine 99, lysine 100, lysine 103, histidine 105, and 125 to 133 contribute to the 5-phospho-alpha-D-ribose 1-diphosphate site; these read YK and DDVISAGTS. Orotate-binding residues include serine 129 and arginine 157.

This sequence belongs to the purine/pyrimidine phosphoribosyltransferase family. PyrE subfamily. As to quaternary structure, homodimer. It depends on Mg(2+) as a cofactor.

It catalyses the reaction orotidine 5'-phosphate + diphosphate = orotate + 5-phospho-alpha-D-ribose 1-diphosphate. The protein operates within pyrimidine metabolism; UMP biosynthesis via de novo pathway; UMP from orotate: step 1/2. Catalyzes the transfer of a ribosyl phosphate group from 5-phosphoribose 1-diphosphate to orotate, leading to the formation of orotidine monophosphate (OMP). The protein is Orotate phosphoribosyltransferase of Nitrosococcus oceani (strain ATCC 19707 / BCRC 17464 / JCM 30415 / NCIMB 11848 / C-107).